Reading from the N-terminus, the 71-residue chain is 8.6 kDa protein (71 aa).

This is 8.6 kDa protein from Pseudomonas phage Pf1 (Bacteriophage Pf1).